We begin with the raw amino-acid sequence, 429 residues long: Adenylosuccinate synthetase (429 aa).

GTP is bound by residues Gly12–Lys18 and Gly40–Thr42. Asp13 acts as the Proton acceptor in catalysis. Mg(2+)-binding residues include Asp13 and Gly40. Residues Asp13–Lys16, Asn38–His41, Thr128, Arg142, Gln223, Thr238, and Arg302 each bind IMP. His41 (proton donor) is an active-site residue. Val298 to Arg304 is a binding site for substrate. GTP contacts are provided by residues Arg304, Lys330–Asp332, and Gly412–Gly414.

Belongs to the adenylosuccinate synthetase family. Homodimer. Mg(2+) is required as a cofactor.

It localises to the cytoplasm. It catalyses the reaction IMP + L-aspartate + GTP = N(6)-(1,2-dicarboxyethyl)-AMP + GDP + phosphate + 2 H(+). Its pathway is purine metabolism; AMP biosynthesis via de novo pathway; AMP from IMP: step 1/2. Functionally, plays an important role in the de novo pathway of purine nucleotide biosynthesis. Catalyzes the first committed step in the biosynthesis of AMP from IMP. In Micrococcus luteus (strain ATCC 4698 / DSM 20030 / JCM 1464 / CCM 169 / CCUG 5858 / IAM 1056 / NBRC 3333 / NCIMB 9278 / NCTC 2665 / VKM Ac-2230) (Micrococcus lysodeikticus), this protein is Adenylosuccinate synthetase.